Consider the following 234-residue polypeptide: Ribosomal RNA small subunit methyltransferase G (234 aa).

Residues Gly-74, Phe-79, 125–126 (AE), and Arg-144 each bind S-adenosyl-L-methionine.

The protein belongs to the methyltransferase superfamily. RNA methyltransferase RsmG family.

The protein localises to the cytoplasm. Specifically methylates the N7 position of a guanine in 16S rRNA. The sequence is that of Ribosomal RNA small subunit methyltransferase G from Roseiflexus sp. (strain RS-1).